Here is a 339-residue protein sequence, read N- to C-terminus: D-glycero-alpha-D-manno-heptose 7-phosphate kinase (339 aa).

Position 17–20 (17–20 (GGTD)) interacts with substrate. ATP is bound by residues serine 57 and 110–116 (GSGLGGS). Mg(2+) contacts are provided by serine 116 and glutamate 148. Residue aspartate 160 is the Proton acceptor of the active site.

Belongs to the GHMP kinase family.

The enzyme catalyses D-glycero-alpha-D-manno-heptose 7-phosphate + ATP = D-glycero-alpha-D-manno-heptose 1,7-bisphosphate + ADP + H(+). The protein operates within nucleotide-sugar biosynthesis; GDP-D-glycero-alpha-D-manno-heptose biosynthesis; GDP-D-glycero-alpha-D-manno-heptose from D-glycero-alpha-D-manno-heptose 7-phosphate: step 1/3. It participates in capsule biogenesis; capsule polysaccharide biosynthesis. In terms of biological role, catalyzes the phosphorylation of D-glycero-alpha-D-manno-heptose 7-phosphate at the C-1 position to form D-glycero-alpha-D-manno-heptose 1,7-bisphosphate. The polypeptide is D-glycero-alpha-D-manno-heptose 7-phosphate kinase (Campylobacter jejuni subsp. jejuni serotype O:2 (strain ATCC 700819 / NCTC 11168)).